The chain runs to 26 residues: Acetyl-CoA acetyltransferase (26 aa).

Cysteine 21 functions as the Acyl-thioester intermediate in the catalytic mechanism.

This sequence belongs to the thiolase-like superfamily. Thiolase family. In terms of assembly, homotetramer. Succinylation, adjacent to a coenzyme A binding site. Desuccinylated by SIRT5.

It localises to the mitochondrion. The catalysed reaction is 2 acetyl-CoA = acetoacetyl-CoA + CoA. The polypeptide is Acetyl-CoA acetyltransferase (Sus scrofa (Pig)).